We begin with the raw amino-acid sequence, 490 residues long: Velvet complex subunit 2 (490 aa).

Disordered stretches follow at residues 23–148 (LYHH…ESQQ) and 295–316 (YQTQ…TYGP). The segment covering 54 to 70 (PPSHHFQLHPGHGHHQQ) has biased composition (basic residues). The segment covering 112–131 (AAEHRDHPQHALDEPSRSHD) has biased composition (basic and acidic residues). In terms of domain architecture, Velvet spans 164 to 474 (ATGRRYHLDV…AAQGIKIPIR (311 aa)). Positions 295–313 (YQTQPTYSQGSSAYPSNGT) are enriched in polar residues.

Belongs to the velvet family. VelB subfamily. In terms of assembly, component of the heterotrimeric velvet complex composed of LAE1, VEL1 and VEL2; VEL1 acting as a bridging protein between LAE1 and VEL2. Forms a heterodimeric complex with VOS1; the formation of the VEL2-VOS1 complex is light-dependent.

It localises to the nucleus. The protein resides in the cytoplasm. Component of the velvet transcription factor complex that controls sexual/asexual developmental ratio in response to light, promoting sexual development in the darkness while stimulating asexual sporulation under illumination. The velvet complex acts as a global regulator for secondary metabolite gene expression. Component of the VEL2-VOS1 heterodimeric complex that plays a dual role in activating genes associated with spore maturation and repressing certain development-associated genes. The VEL2-VOS1 complex binds DNA through the DNA-binding domain of VOS1 that recognizes an 11-nucleotide consensus sequence 5'-CTGGCCGCGGC-3' consisting of two motifs in the promoters of key developmental regulatory genes. Regulates expression of cellulase-encoding genes such as the cellobiohydrolase-encoding genes cbh1 and cbh2, the endo-beta-1,4-glucanase-encoding genes egl1 and egl2, and the beta-glucosidase-encoding gene bgl1. The sequence is that of Velvet complex subunit 2 from Hypocrea jecorina (strain QM6a) (Trichoderma reesei).